Consider the following 469-residue polypeptide: UDP-N-acetylmuramoylalanine--D-glutamate ligase (469 aa).

Gly-121 to Thr-127 contacts ATP.

Belongs to the MurCDEF family.

Its subcellular location is the cytoplasm. The catalysed reaction is UDP-N-acetyl-alpha-D-muramoyl-L-alanine + D-glutamate + ATP = UDP-N-acetyl-alpha-D-muramoyl-L-alanyl-D-glutamate + ADP + phosphate + H(+). The protein operates within cell wall biogenesis; peptidoglycan biosynthesis. In terms of biological role, cell wall formation. Catalyzes the addition of glutamate to the nucleotide precursor UDP-N-acetylmuramoyl-L-alanine (UMA). This Agrobacterium fabrum (strain C58 / ATCC 33970) (Agrobacterium tumefaciens (strain C58)) protein is UDP-N-acetylmuramoylalanine--D-glutamate ligase.